The primary structure comprises 502 residues: Inosine-5'-monophosphate dehydrogenase 2 (502 aa).

S2 bears the N-acetylserine mark. A CBS domain is found at 166–225; that stretch reads MKSCENKDYYVPWDIDLDKIEAVLEDKQKGFVVLEKEGETVNVVTKDDVERVKGYPKLGS. Residues 264–266 and 314–316 each bind NAD(+); these read DSS and GMG. K(+)-binding residues include G316 and G318. An IMP-binding site is contributed by S319. Residue C321 participates in K(+) binding. The active-site Thioimidate intermediate is the C321. IMP-binding positions include 354-356, 377-378, and 401-405; these read DGG, GS, and YRGMG. The Proton acceptor role is filled by R417. Q429 is a binding site for IMP. Positions 488, 489, and 490 each coordinate K(+).

Belongs to the IMPDH/GMPR family. As to quaternary structure, homotetramer. It depends on K(+) as a cofactor.

It localises to the cytoplasm. The enzyme catalyses IMP + NAD(+) + H2O = XMP + NADH + H(+). It functions in the pathway purine metabolism; XMP biosynthesis via de novo pathway; XMP from IMP: step 1/1. Its activity is regulated as follows. Mycophenolic acid (MPA) is a non-competitive inhibitor that prevents formation of the closed enzyme conformation by binding to the same site as the amobile flap. In contrast, mizoribine monophosphate (MZP) is a competitive inhibitor that induces the closed conformation. MPA is a potent inhibitor of mammalian IMPDHs but a poor inhibitor of the bacterial enzymes. MZP is a more potent inhibitor of bacterial IMPDH. Functionally, catalyzes the conversion of inosine 5'-phosphate (IMP) to xanthosine 5'-phosphate (XMP), the first committed and rate-limiting step in the de novo synthesis of guanine nucleotides, and therefore plays an important role in the regulation of cell growth. This is Inosine-5'-monophosphate dehydrogenase 2 from Arabidopsis thaliana (Mouse-ear cress).